Reading from the N-terminus, the 433-residue chain is ACT domain-containing protein ACR6 (433 aa).

ACT domains follow at residues 30–110, 120–207, 250–326, and 328–402; these read VIQV…RSSV, SIEL…SCSD, VVTM…ASEG, and ELEL…VKKK.

May bind amino acids. The polypeptide is ACT domain-containing protein ACR6 (Arabidopsis thaliana (Mouse-ear cress)).